A 129-amino-acid chain; its full sequence is MPMASPQTLVLYLLVLAVTEAWGQEAVIPGCHLHPFNVTVRSDRQGTCQGSHVAQACVGHCESSAFPSRYSVLVASGYRHNITSVSQCCTISGLKKVKVQLQCVGSRREELEIFTARACQCDMCRLSRY.

An N-terminal signal peptide occupies residues 1-23 (MPMASPQTLVLYLLVLAVTEAWG). 4 disulfide bridges follow: cysteine 31-cysteine 89, cysteine 48-cysteine 103, cysteine 57-cysteine 119, and cysteine 61-cysteine 121. Asparagine 37 and asparagine 81 each carry an N-linked (GlcNAc...) asparagine glycan.

The protein belongs to the glycoprotein hormones subunit alpha family. In terms of assembly, heterodimer with GPHB5; this heterodimer interacts with thyroid-stimulating hormone receptor (TSHR), and hence stimulates cAMP production. Glycosylated. Found in a variety of tissues.

The protein resides in the secreted. In terms of biological role, functions as a heterodimeric glycoprotein hormone with GPHB5 able to bind and activate the thyroid-stimulating hormone receptor (TSHR), leading to increased cAMP production. Plays a central role in controlling thyroid cell metabolism. This is Glycoprotein hormone alpha-2 (GPHA2) from Homo sapiens (Human).